The primary structure comprises 331 residues: Holliday junction branch migration complex subunit RuvB (331 aa).

Residues 1–182 form a large ATPase domain (RuvB-L) region; sequence MSSDTLHKYE…FGIPLHLEFY (182 aa). ATP contacts are provided by residues leucine 21, arginine 22, glycine 63, lysine 66, threonine 67, threonine 68, 129–131, arginine 172, tyrosine 182, and arginine 219; that span reads EDY. Mg(2+) is bound at residue threonine 67. The small ATPAse domain (RuvB-S) stretch occupies residues 183–254; it reads SVDELVLVIK…FANSALFRLG (72 aa). The segment at 257–331 is head domain (RuvB-H); the sequence is GAGFDKMDLK…FEYLLSSKYI (75 aa). DNA-binding residues include arginine 310 and arginine 315.

It belongs to the RuvB family. Homohexamer. Forms an RuvA(8)-RuvB(12)-Holliday junction (HJ) complex. HJ DNA is sandwiched between 2 RuvA tetramers; dsDNA enters through RuvA and exits via RuvB. An RuvB hexamer assembles on each DNA strand where it exits the tetramer. Each RuvB hexamer is contacted by two RuvA subunits (via domain III) on 2 adjacent RuvB subunits; this complex drives branch migration. In the full resolvosome a probable DNA-RuvA(4)-RuvB(12)-RuvC(2) complex forms which resolves the HJ.

Its subcellular location is the cytoplasm. It carries out the reaction ATP + H2O = ADP + phosphate + H(+). Its function is as follows. The RuvA-RuvB-RuvC complex processes Holliday junction (HJ) DNA during genetic recombination and DNA repair, while the RuvA-RuvB complex plays an important role in the rescue of blocked DNA replication forks via replication fork reversal (RFR). RuvA specifically binds to HJ cruciform DNA, conferring on it an open structure. The RuvB hexamer acts as an ATP-dependent pump, pulling dsDNA into and through the RuvAB complex. RuvB forms 2 homohexamers on either side of HJ DNA bound by 1 or 2 RuvA tetramers; 4 subunits per hexamer contact DNA at a time. Coordinated motions by a converter formed by DNA-disengaged RuvB subunits stimulates ATP hydrolysis and nucleotide exchange. Immobilization of the converter enables RuvB to convert the ATP-contained energy into a lever motion, pulling 2 nucleotides of DNA out of the RuvA tetramer per ATP hydrolyzed, thus driving DNA branch migration. The RuvB motors rotate together with the DNA substrate, which together with the progressing nucleotide cycle form the mechanistic basis for DNA recombination by continuous HJ branch migration. Branch migration allows RuvC to scan DNA until it finds its consensus sequence, where it cleaves and resolves cruciform DNA. In Anaplasma marginale (strain St. Maries), this protein is Holliday junction branch migration complex subunit RuvB.